Reading from the N-terminus, the 210-residue chain is MANVKLFNQGCQEIGTVDLAPEVFEVEVQPELLHLVVRAQLAAKRAGTHSVKTRAFVSGGGKKPWRQKGTGRARAGSTRSPLWRGGAVVHGPQPRDYTFKVNRKVRQLALRMALSAKLVEDQLVLLDAIAFPEVKTKLMAKVVSDFSWKKALIVLPESDNNLELSARNLPGIKVVRQDMLNVYDVLLHDHVVMMKDAALKVQERLGHGIR.

The segment at 56-80 (FVSGGGKKPWRQKGTGRARAGSTRS) is disordered.

The protein belongs to the universal ribosomal protein uL4 family. As to quaternary structure, part of the 50S ribosomal subunit.

In terms of biological role, one of the primary rRNA binding proteins, this protein initially binds near the 5'-end of the 23S rRNA. It is important during the early stages of 50S assembly. It makes multiple contacts with different domains of the 23S rRNA in the assembled 50S subunit and ribosome. Its function is as follows. Forms part of the polypeptide exit tunnel. The polypeptide is Large ribosomal subunit protein uL4 (Solidesulfovibrio magneticus (strain ATCC 700980 / DSM 13731 / RS-1) (Desulfovibrio magneticus)).